The sequence spans 491 residues: MKNQDQALIFEVSKEGRIGYSLPKLDVEEVKLEDVFESDYIRVEDAELPEVSELDIMRHYTALSNRNHGVDSGFYPLGSCTMKYNPKINESVARFAGFANIHPLQDEKTVQGAMELMYDLQEHLIEITGMDTVTLQPAAGAHGEWTGLMLIRAYHEANGDFNRTKVIVPDSAHGTNPASATVAGFETITVKSNENGLVDLEDLKRVVNEETAALMLTNPNTLGLFEENILEMAEIVHNAGGKLYYDGANLNAVLSQARPGDMGFDVVHLNLHKTFTGPHGGGGPGSGPVGVKADLIPYLPKPILEKTENGYHFNYDRPEAIGRVKPFYGNFGINVRAYTYIRSMGPDGLRAVTEYAVLNANYMMRRLAPFYDLPFDRHCKHEFVLSGRRQKKLGVRTLDIAKRLLDFGYHPPTIYFPLNVEECIMIEPTETESKETLDGFIDKMIQIAKEVEENPEVVQEAPHTTVIKRLDETMAARKPVLRYAKPAPVQV.

Lysine 273 is subject to N6-(pyridoxal phosphate)lysine.

It belongs to the GcvP family. C-terminal subunit subfamily. As to quaternary structure, the glycine cleavage system is composed of four proteins: P, T, L and H. In this organism, the P 'protein' is a heterodimer of two subunits. Pyridoxal 5'-phosphate serves as cofactor.

The catalysed reaction is N(6)-[(R)-lipoyl]-L-lysyl-[glycine-cleavage complex H protein] + glycine + H(+) = N(6)-[(R)-S(8)-aminomethyldihydrolipoyl]-L-lysyl-[glycine-cleavage complex H protein] + CO2. Functionally, the glycine cleavage system catalyzes the degradation of glycine. The P protein binds the alpha-amino group of glycine through its pyridoxal phosphate cofactor; CO(2) is released and the remaining methylamine moiety is then transferred to the lipoamide cofactor of the H protein. In Bacillus cereus (strain B4264), this protein is Probable glycine dehydrogenase (decarboxylating) subunit 2.